Consider the following 321-residue polypeptide: Olfactory receptor 5P60 (321 aa).

The Extracellular segment spans residues Met1–Ile28. An N-linked (GlcNAc...) asparagine glycan is attached at Asn8. Residues Val29 to Ile49 traverse the membrane as a helical segment. The Cytoplasmic segment spans residues Leu50 to Gln57. The chain crosses the membrane as a helical span at residues Leu58–Ser78. The Extracellular segment spans residues Ser79–Ile102. Cys100 and Cys192 are disulfide-bonded. Residues Gln103–Tyr123 traverse the membrane as a helical segment. At Asp124–Ser136 the chain is on the cytoplasmic side. Residues Thr137–Leu157 form a helical membrane-spanning segment. The Extracellular segment spans residues Asn158 to Val199. The helical transmembrane segment at Leu200–Ser220 threads the bilayer. The Cytoplasmic segment spans residues Tyr221–Ala240. A helical membrane pass occupies residues Phe241–Ile261. Topologically, residues Tyr262–Asn274 are extracellular. A helical transmembrane segment spans residues Lys275–Leu295. At Arg296 to Tyr321 the chain is on the cytoplasmic side.

It belongs to the G-protein coupled receptor 1 family.

Its subcellular location is the cell membrane. Functionally, potential odorant receptor. The sequence is that of Olfactory receptor 5P60 from Mus musculus (Mouse).